The sequence spans 506 residues: Cytochrome P450 monooxygenase atr2 (506 aa).

A helical membrane pass occupies residues 18-38 (VFAGLVLASLLTTTYCIWNIF). Cysteine 451 contributes to the heme binding site.

This sequence belongs to the cytochrome P450 family. Heme serves as cofactor.

The protein localises to the membrane. It carries out the reaction 4-O-demethylbarbatate + reduced [NADPH--hemoprotein reductase] + O2 = proatranorin II + oxidized [NADPH--hemoprotein reductase] + H2O + H(+). The catalysed reaction is proatranorin II + reduced [NADPH--hemoprotein reductase] + O2 = proatranorin III + oxidized [NADPH--hemoprotein reductase] + 2 H2O + H(+). The enzyme catalyses proatranorin I + reduced [NADPH--hemoprotein reductase] + O2 = proatranorin IV + oxidized [NADPH--hemoprotein reductase] + H2O + H(+). It catalyses the reaction proatranorin IV + reduced [NADPH--hemoprotein reductase] + O2 = atranorin + oxidized [NADPH--hemoprotein reductase] + 2 H2O + H(+). It functions in the pathway secondary metabolite biosynthesis; terpenoid biosynthesis. In terms of biological role, cytochrome P450 monooxygenase; part of the gene cluster that mediates the biosynthesis of atranorin, a depside of polyketide origin that accumulates in the cortical or medullary layers of lichen thalli. Atr2 performs the oxidation at the C-9 position of 4-O-demethylbarbatic acid to yield proatranorin III via proatranorin II. Atr2 is also able to oxidize the atr3 product proatranorin I to produce the final compound atranorin. The first step in the pathway is performed by the non-reducing polyketide synthase atr1 that produces 4-O-demethylbarbatic acid composed of two 3-methylorsellinic acid (3MOA) moieties. The pathway continues with the actions of the cytochrome P450 monooygenase atr2 that catalizes the oxidation of c-9 and the O-methyltransferase atr3 that performs the methylation of the carboxyl group to yield atranorin, via the proatranorin II and III intermediates if atr2 acts first, or the proatranorin I intermediate if atr3 acts first. This Stereocaulon alpinum (Alpine snow lichen) protein is Cytochrome P450 monooxygenase atr2.